Here is a 96-residue protein sequence, read N- to C-terminus: Small ribosomal subunit protein bS20 (96 aa).

Belongs to the bacterial ribosomal protein bS20 family.

In terms of biological role, binds directly to 16S ribosomal RNA. This is Small ribosomal subunit protein bS20 from Anaplasma phagocytophilum (strain HZ).